The following is a 282-amino-acid chain: Elongation factor Ts (282 aa).

The interval 80 to 83 (TDFV) is involved in Mg(2+) ion dislocation from EF-Tu.

Belongs to the EF-Ts family.

The protein resides in the cytoplasm. Functionally, associates with the EF-Tu.GDP complex and induces the exchange of GDP to GTP. It remains bound to the aminoacyl-tRNA.EF-Tu.GTP complex up to the GTP hydrolysis stage on the ribosome. The protein is Elongation factor Ts (tsf) of Chlamydia muridarum (strain MoPn / Nigg).